A 188-amino-acid chain; its full sequence is Protein SSX5 (188 aa).

Positions 20 to 83 (KMQKAFDDIA…KRVADFQGND (64 aa)) constitute a KRAB-related domain. Residues 78–188 (DFQGNDFDND…EISDPQEDDE (111 aa)) form a disordered region. Positions 112–122 (TPEKPAEEGND) are enriched in basic and acidic residues. Residues 144 to 155 (KLNTSEKVNKTS) show a composition bias toward polar residues. The segment covering 156-170 (GPKRGKHAWTHRVRE) has biased composition (basic residues). The span at 179 to 188 (EISDPQEDDE) shows a compositional bias: acidic residues.

The protein belongs to the SSX family.

Could act as a modulator of transcription. This is Protein SSX5 (SSX5) from Homo sapiens (Human).